Reading from the N-terminus, the 950-residue chain is Serine/threonine-protein kinase atg1 (950 aa).

In terms of domain architecture, Protein kinase spans 6-311 (YTRLDEIGRG…FPDFFENGVI (306 aa)). ATP-binding positions include 12-20 (IGRGSFATV) and Lys-35. Asp-149 (proton acceptor) is an active-site residue. 5 disordered regions span residues 314-425 (PIPG…HATA), 443-467 (RQRG…LREE), 505-570 (QGGI…QSPT), 671-690 (VQTD…NPDS), and 926-950 (PTPS…TPPK). 3 stretches are compositionally biased toward polar residues: residues 370 to 389 (GLTQ…PTTT), 447 to 458 (RNTFSEGSPQTD), and 511 to 520 (GAQTGALSRR). Residues 549 to 565 (SRADSMHNRQSSYERRY) show a composition bias toward basic and acidic residues.

Belongs to the protein kinase superfamily. Ser/Thr protein kinase family. APG1/unc-51/ULK1 subfamily. In terms of assembly, homodimer. Forms a ternary complex with ATG13 and ATG17.

It localises to the cytoplasm. Its subcellular location is the preautophagosomal structure membrane. It catalyses the reaction L-seryl-[protein] + ATP = O-phospho-L-seryl-[protein] + ADP + H(+). It carries out the reaction L-threonyl-[protein] + ATP = O-phospho-L-threonyl-[protein] + ADP + H(+). Its function is as follows. Serine/threonine protein kinase involved in the cytoplasm to vacuole transport (Cvt) and found to be essential in autophagy, where it is required for the formation of autophagosomes. Involved in the clearance of protein aggregates which cannot be efficiently cleared by the proteasome. Required for selective autophagic degradation of the nucleus (nucleophagy) as well as for mitophagy which contributes to regulate mitochondrial quantity and quality by eliminating the mitochondria to a basal level to fulfill cellular energy requirements and preventing excess ROS production. Also involved in endoplasmic reticulum-specific autophagic process, in selective removal of ER-associated degradation (ERAD) substrates. Plays a key role in ATG9 and ATG23 cycling through the pre-autophagosomal structure and is necessary to promote ATG18 binding to ATG9 through phosphorylation of ATG9. Catalyzes phosphorylation of ATG4, decreasing the interaction between ATG4 and ATG8 and impairing deconjugation of PE-conjugated forms of ATG8. The sequence is that of Serine/threonine-protein kinase atg1 from Neosartorya fischeri (strain ATCC 1020 / DSM 3700 / CBS 544.65 / FGSC A1164 / JCM 1740 / NRRL 181 / WB 181) (Aspergillus fischerianus).